Consider the following 105-residue polypeptide: Malonate decarboxylase acyl carrier protein (105 aa).

Ser28 is modified (O-(phosphoribosyl dephospho-coenzyme A)serine).

The protein belongs to the MdcC family. Post-translationally, covalently binds the prosthetic group of malonate decarboxylase.

The protein localises to the cytoplasm. Its function is as follows. Subunit of malonate decarboxylase, it is an acyl carrier protein to which acetyl and malonyl thioester residues are bound via a 2'-(5''-phosphoribosyl)-3'-dephospho-CoA prosthetic group and turn over during the catalytic mechanism. In Xanthomonas euvesicatoria pv. vesicatoria (strain 85-10) (Xanthomonas campestris pv. vesicatoria), this protein is Malonate decarboxylase acyl carrier protein.